The primary structure comprises 581 residues: Proteasome-associated ATPase (581 aa).

The tract at residues methionine 1 to aspartate 28 is disordered. Over residues methionine 14–serine 24 the composition is skewed to polar residues. Residues glutamate 27–lysine 66 adopt a coiled-coil conformation. Glycine 248–leucine 253 is an ATP binding site. The segment at glycine 561–leucine 581 is disordered. The segment covering glutamate 572–leucine 581 has biased composition (polar residues). A docks into pockets in the proteasome alpha-ring region spans residues tyrosine 580–leucine 581.

The protein belongs to the AAA ATPase family. In terms of assembly, homohexamer. Assembles into a hexameric ring structure that caps the 20S proteasome core. Strongly interacts with the prokaryotic ubiquitin-like protein Pup through a hydrophobic interface; the interacting region of ARC lies in its N-terminal coiled-coil domain. There is one Pup binding site per ARC hexamer ring. Upon ATP-binding, the C-terminus of ARC interacts with the alpha-rings of the proteasome core, possibly by binding to the intersubunit pockets.

It functions in the pathway protein degradation; proteasomal Pup-dependent pathway. Functionally, ATPase which is responsible for recognizing, binding, unfolding and translocation of pupylated proteins into the bacterial 20S proteasome core particle. May be essential for opening the gate of the 20S proteasome via an interaction with its C-terminus, thereby allowing substrate entry and access to the site of proteolysis. Thus, the C-termini of the proteasomal ATPase may function like a 'key in a lock' to induce gate opening and therefore regulate proteolysis. This is Proteasome-associated ATPase from Sanguibacter keddieii (strain ATCC 51767 / DSM 10542 / NCFB 3025 / ST-74).